A 208-amino-acid polypeptide reads, in one-letter code: ATP-dependent Clp protease proteolytic subunit (208 aa).

Catalysis depends on Ser105, which acts as the Nucleophile. Residue His130 is part of the active site.

The protein belongs to the peptidase S14 family. In terms of assembly, fourteen ClpP subunits assemble into 2 heptameric rings which stack back to back to give a disk-like structure with a central cavity, resembling the structure of eukaryotic proteasomes.

The protein localises to the cytoplasm. It carries out the reaction Hydrolysis of proteins to small peptides in the presence of ATP and magnesium. alpha-casein is the usual test substrate. In the absence of ATP, only oligopeptides shorter than five residues are hydrolyzed (such as succinyl-Leu-Tyr-|-NHMec, and Leu-Tyr-Leu-|-Tyr-Trp, in which cleavage of the -Tyr-|-Leu- and -Tyr-|-Trp bonds also occurs).. Its function is as follows. Cleaves peptides in various proteins in a process that requires ATP hydrolysis. Has a chymotrypsin-like activity. Plays a major role in the degradation of misfolded proteins. This chain is ATP-dependent Clp protease proteolytic subunit, found in Xylella fastidiosa (strain 9a5c).